The following is a 70-amino-acid chain: Protein SlyX homolog (70 aa).

Belongs to the SlyX family.

The sequence is that of Protein SlyX homolog from Shewanella denitrificans (strain OS217 / ATCC BAA-1090 / DSM 15013).